The following is a 239-amino-acid chain: Cysteine-rich venom protein (239 aa).

Residues 1 to 18 (MIVFILLSLAAVLQQSVA) form the signal peptide. The SCP domain occupies 37–165 (VDMHNSFRRS…PYNYFYVCQY (129 aa)). Cystine bridges form between Cys-74–Cys-152, Cys-91–Cys-166, Cys-147–Cys-163, Cys-185–Cys-192, Cys-188–Cys-197, Cys-210–Cys-228, and Cys-219–Cys-232. The ShKT domain maps to 201–234 (CPINNVFTNCDSLLQQSSCEDSYITTNCGASCFC).

It belongs to the CRISP family. Expressed by the venom gland.

Its subcellular location is the secreted. Blocks contraction of smooth muscle elicited by high potassium-induced depolarization, but does not block caffeine-stimulated contraction. May target voltage-gated calcium channels on smooth muscle. The protein is Cysteine-rich venom protein of Cerberus rynchops (Dog-faced water snake).